Here is a 425-residue protein sequence, read N- to C-terminus: Putative integrase/recombinase y4rF (425 aa).

Residues 123-210 enclose the Core-binding (CB) domain; it reads DPDALLLASF…HIRTFLRFLC (88 aa). Positions 233 to 418 constitute a Tyr recombinase domain; the sequence is HLPPRLAWGD…AASQLAEVAL (186 aa). Residues arginine 273, lysine 298, histidine 370, arginine 373, and histidine 396 contribute to the active site. The active-site O-(3'-phospho-DNA)-tyrosine intermediate is the tyrosine 405.

This sequence belongs to the 'phage' integrase family.

The protein is Putative integrase/recombinase y4rF of Sinorhizobium fredii (strain NBRC 101917 / NGR234).